A 143-amino-acid polypeptide reads, in one-letter code: Aspartate 1-decarboxylase (143 aa).

Residue S25 is the Schiff-base intermediate with substrate; via pyruvic acid of the active site. S25 is subject to Pyruvic acid (Ser). T57 contributes to the substrate binding site. The active-site Proton donor is Y58. 73-75 (GAA) is a binding site for substrate.

The protein belongs to the PanD family. In terms of assembly, heterooctamer of four alpha and four beta subunits. The cofactor is pyruvate. Is synthesized initially as an inactive proenzyme, which is activated by self-cleavage at a specific serine bond to produce a beta-subunit with a hydroxyl group at its C-terminus and an alpha-subunit with a pyruvoyl group at its N-terminus.

The protein localises to the cytoplasm. It catalyses the reaction L-aspartate + H(+) = beta-alanine + CO2. The protein operates within cofactor biosynthesis; (R)-pantothenate biosynthesis; beta-alanine from L-aspartate: step 1/1. Functionally, catalyzes the pyruvoyl-dependent decarboxylation of aspartate to produce beta-alanine. The chain is Aspartate 1-decarboxylase from Mycobacterium ulcerans (strain Agy99).